The sequence spans 90 residues: Probable Fe(2+)-trafficking protein (90 aa).

Belongs to the Fe(2+)-trafficking protein family.

Its function is as follows. Could be a mediator in iron transactions between iron acquisition and iron-requiring processes, such as synthesis and/or repair of Fe-S clusters in biosynthetic enzymes. The polypeptide is Probable Fe(2+)-trafficking protein (Vibrio cholerae serotype O1 (strain ATCC 39541 / Classical Ogawa 395 / O395)).